Reading from the N-terminus, the 194-residue chain is Fibroblast growth factor 7 (194 aa).

The first 31 residues, 1 to 31 (MRKWILTWILPSLLHRSCFHIICLVGTLSLD), serve as a signal peptide directing secretion. Asn-45 is a glycosylation site (N-linked (GlcNAc...) asparagine).

It belongs to the heparin-binding growth factors family. In terms of assembly, interacts with FGFBP1. Interacts with FGFR2. Affinity between fibroblast growth factors (FGFs) and their receptors is increased by heparan sulfate glycosaminoglycans that function as coreceptors.

It is found in the secreted. Its function is as follows. Plays an important role in the regulation of embryonic development, cell proliferation and cell differentiation. Required for normal branching morphogenesis. Growth factor active on keratinocytes. Possible major paracrine effector of normal epithelial cell proliferation. This Sus scrofa (Pig) protein is Fibroblast growth factor 7 (FGF7).